The sequence spans 359 residues: DNA ligase (359 aa).

ATP-binding positions include Glu-32–Tyr-35, Arg-39, Arg-55–Ser-57, and Glu-93. The active-site N6-AMP-lysine intermediate is the Lys-34. Glu-217 is a binding site for a divalent metal cation. Residues Lys-232 and Lys-238 each coordinate ATP.

The protein belongs to the ATP-dependent DNA ligase family. It depends on a divalent metal cation as a cofactor.

It carries out the reaction ATP + (deoxyribonucleotide)n-3'-hydroxyl + 5'-phospho-(deoxyribonucleotide)m = (deoxyribonucleotide)n+m + AMP + diphosphate.. Its function is as follows. DNA ligase that seals nicks in double-stranded DNA during DNA replication, DNA recombination and DNA repair in an ATP-dependent reaction. Binds specifically to DNA nicks containing a 3'-OH and a 5'-phosphate group. The chain is DNA ligase from Escherichia phage T7 (Bacteriophage T7).